A 123-amino-acid polypeptide reads, in one-letter code: Small ribosomal subunit protein uS13 (123 aa).

The segment at 95–123 is disordered; it reads GLPVRGQRTKTNARTRKGPIKTVGAKRKK.

The protein belongs to the universal ribosomal protein uS13 family. Part of the 30S ribosomal subunit. Forms a loose heterodimer with protein S19. Forms two bridges to the 50S subunit in the 70S ribosome.

Its function is as follows. Located at the top of the head of the 30S subunit, it contacts several helices of the 16S rRNA. In the 70S ribosome it contacts the 23S rRNA (bridge B1a) and protein L5 of the 50S subunit (bridge B1b), connecting the 2 subunits; these bridges are implicated in subunit movement. Contacts the tRNAs in the A and P-sites. In Desulfitobacterium hafniense (strain DSM 10664 / DCB-2), this protein is Small ribosomal subunit protein uS13.